The chain runs to 316 residues: N-acetylmuramic acid 6-phosphate etherase (316 aa).

The region spanning 66-229 (IVAAIGRGGR…STASMIRLGK (164 aa)) is the SIS domain. The Proton donor role is filled by glutamate 94. Glutamate 125 is a catalytic residue.

The protein belongs to the GCKR-like family. MurNAc-6-P etherase subfamily. Homodimer.

The catalysed reaction is N-acetyl-D-muramate 6-phosphate + H2O = N-acetyl-D-glucosamine 6-phosphate + (R)-lactate. It participates in amino-sugar metabolism; 1,6-anhydro-N-acetylmuramate degradation. Its pathway is amino-sugar metabolism; N-acetylmuramate degradation. It functions in the pathway cell wall biogenesis; peptidoglycan recycling. Its function is as follows. Specifically catalyzes the cleavage of the D-lactyl ether substituent of MurNAc 6-phosphate, producing GlcNAc 6-phosphate and D-lactate. Together with AnmK, is also required for the utilization of anhydro-N-acetylmuramic acid (anhMurNAc) either imported from the medium or derived from its own cell wall murein, and thus plays a role in cell wall recycling. In Jannaschia sp. (strain CCS1), this protein is N-acetylmuramic acid 6-phosphate etherase.